Consider the following 240-residue polypeptide: Protein OPG176 (240 aa).

This sequence belongs to the orthopoxvirus OPG176 family. In terms of assembly, tetramer. Interacts with host MYD88, TRF4, TICAM2 and MAL.

Functionally, BCL2-like protein which disrupts the host immune response by inhibiting the TLR4 signaling pathway leading to NF-kappa-B activation. Acts close to the plasma membrane and targets several host TIR-domain containing adapter proteins including MYD88, TIRAP, TRIF and TICAM2. In turn, blocks the host NF-kappa-B and TRIF-mediated IRF3 activation. The protein is Protein OPG176 (OPG176) of Bos taurus (Bovine).